The sequence spans 307 residues: Elongation factor Ts, mitochondrial (307 aa).

Residues 1 to 19 constitute a mitochondrion transit peptide; it reads MIFTRLTRFVGHGTGLRLY.

The protein belongs to the EF-Ts family.

The protein resides in the mitochondrion. Associates with the EF-Tu.GDP complex and induces the exchange of GDP to GTP. It remains bound to the aminoacyl-tRNA.EF-Tu.GTP complex up to the GTP hydrolysis stage on the ribosome. This Aedes aegypti (Yellowfever mosquito) protein is Elongation factor Ts, mitochondrial.